Consider the following 264-residue polypeptide: [LysW]-aminoadipate/[LysW]-glutamate kinase (264 aa).

Residues 35 to 36 (GG), Arg-62, and Asn-167 contribute to the substrate site.

Belongs to the acetylglutamate kinase family. LysZ subfamily.

It is found in the cytoplasm. The enzyme catalyses [amino-group carrier protein]-C-terminal-N-(1,4-dicarboxybutan-1-yl)-L-glutamine + ATP = [amino-group carrier protein]-C-terminal-N-(1-carboxy-5-phosphooxy-5-oxopentan-1-yl)-L-glutamine + ADP. The catalysed reaction is [amino-group carrier protein]-C-terminal-gamma-(L-glutamyl)-L-glutamate + ATP = [amino-group carrier protein]-C-terminal-gamma-(5-phospho-L-glutamyl)-L-glutamate + ADP. The protein operates within amino-acid biosynthesis; L-lysine biosynthesis via AAA pathway; L-lysine from L-alpha-aminoadipate (Thermus route): step 2/5. It participates in amino-acid biosynthesis; L-arginine biosynthesis. Involved in both the arginine and lysine biosynthetic pathways. Phosphorylates the LysW-bound precursors glutamate (for arginine biosynthesis), respectively alpha-aminoadipate (for lysine biosynthesis). In Saccharolobus solfataricus (strain ATCC 35092 / DSM 1617 / JCM 11322 / P2) (Sulfolobus solfataricus), this protein is [LysW]-aminoadipate/[LysW]-glutamate kinase.